The sequence spans 507 residues: GMP synthase [glutamine-hydrolyzing] (507 aa).

Positions 9 to 202 (TILIIDFGSQ…VHRIVGVKPG (194 aa)) constitute a Glutamine amidotransferase type-1 domain. Cysteine 86 (nucleophile) is an active-site residue. Catalysis depends on residues histidine 176 and glutamate 178. The GMPS ATP-PPase domain occupies 203 to 395 (WTMGAYREQA…LGLPDSFIGR (193 aa)). 230–236 (SGGVDSS) lines the ATP pocket.

As to quaternary structure, homodimer.

It carries out the reaction XMP + L-glutamine + ATP + H2O = GMP + L-glutamate + AMP + diphosphate + 2 H(+). Its pathway is purine metabolism; GMP biosynthesis; GMP from XMP (L-Gln route): step 1/1. Its function is as follows. Catalyzes the synthesis of GMP from XMP. The chain is GMP synthase [glutamine-hydrolyzing] from Brucella melitensis biotype 1 (strain ATCC 23456 / CCUG 17765 / NCTC 10094 / 16M).